The following is a 380-amino-acid chain: MSSSVGATLEAIKYTRGSLEILDQLLIPKSFIYEVVDTTEKAFHAIRDMKVRGAPAIAIVAVLTLAVEANQLLQSNDALLADASAIAKLFNEKLDRLAESRPTAVNLFQAVGDFKNKIAQSLETNKTGTEIVQLIIDEAEALMNRDIEENAKISECGSDHIISTNPSSTTLKVLTHCNTGALATMKYGTALGVIRFLQKKNVLEHAFCTETRPYNQGARLTAFELVYEKIPSTLICDSAVSYLFKTKKIDAIIVGADRVCNNGDTANKIGTYHIAVSAKHHGIPFYVAAPFTSIDLTLASGDLITIEERSEKEITHYRNNDERAVVENIGVWNPGFDVTTADLISGFFTDIGVFTPLTCATTGKKYYDLKTQQAEKLKQQ.

The active-site Proton donor is aspartate 257.

It belongs to the eIF-2B alpha/beta/delta subunits family. MtnA subfamily.

The protein resides in the cytoplasm. It localises to the nucleus. The enzyme catalyses 5-(methylsulfanyl)-alpha-D-ribose 1-phosphate = 5-(methylsulfanyl)-D-ribulose 1-phosphate. It participates in amino-acid biosynthesis; L-methionine biosynthesis via salvage pathway; L-methionine from S-methyl-5-thio-alpha-D-ribose 1-phosphate: step 1/6. Catalyzes the interconversion of methylthioribose-1-phosphate (MTR-1-P) into methylthioribulose-1-phosphate (MTRu-1-P). The chain is Methylthioribose-1-phosphate isomerase from Naegleria gruberi (Amoeba).